The primary structure comprises 186 residues: Biofilm operon icaADBC HTH-type negative transcriptional regulator IcaR (186 aa).

Residues 1 to 59 (MKDKIIDNAITLFSEKGYDGTTLDDIAKSVNIKKASLYYHFDSKKSIYEQSVKCCFDYL) form the HTH tetR-type domain. The H-T-H motif DNA-binding region spans 22–41 (TLDDIAKSVNIKKASLYYHF).

Homodimer.

In terms of biological role, represses transcription of the icaADBC operon necessary for biofilm production. The protein is Biofilm operon icaADBC HTH-type negative transcriptional regulator IcaR (icaR) of Staphylococcus aureus (strain NCTC 8325 / PS 47).